The sequence spans 1004 residues: uncharacterized protein (1004 aa).

The N-linked (GlcNAc...) asparagine glycan is linked to asparagine 27. 4 helical membrane passes run 38–58 (FGFS…LLAI), 77–97 (IVPD…LIVI), 188–208 (LSPV…LIAY), and 324–344 (FILM…SLFS). 3 N-linked (GlcNAc...) asparagine glycosylation sites follow: asparagine 392, asparagine 418, and asparagine 421. Helical transmembrane passes span 422-442 (MSLS…VIAF) and 599-619 (MSNI…IIDM). The N-linked (GlcNAc...) asparagine glycan is linked to asparagine 627. A run of 2 helical transmembrane segments spans residues 726–746 (GYPL…ISVF) and 823–843 (GDYI…VLGS). Asparagine 859 carries an N-linked (GlcNAc...) asparagine glycan.

This sequence to yeast YPR031w.

The protein resides in the membrane. This is an uncharacterized protein from Schizosaccharomyces pombe (strain 972 / ATCC 24843) (Fission yeast).